The following is a 357-amino-acid chain: N-acetyl-gamma-glutamyl-phosphate reductase (357 aa).

Residue cysteine 160 is part of the active site.

The protein belongs to the NAGSA dehydrogenase family. Type 1 subfamily.

The protein localises to the cytoplasm. The catalysed reaction is N-acetyl-L-glutamate 5-semialdehyde + phosphate + NADP(+) = N-acetyl-L-glutamyl 5-phosphate + NADPH + H(+). It functions in the pathway amino-acid biosynthesis; L-arginine biosynthesis; N(2)-acetyl-L-ornithine from L-glutamate: step 3/4. Functionally, catalyzes the NADPH-dependent reduction of N-acetyl-5-glutamyl phosphate to yield N-acetyl-L-glutamate 5-semialdehyde. In Synechococcus sp. (strain CC9605), this protein is N-acetyl-gamma-glutamyl-phosphate reductase.